The chain runs to 493 residues: Probable cytochrome P450 508A2 (493 aa).

A helical membrane pass occupies residues methionine 1–lysine 21. Cysteine 439 lines the heme pocket.

Belongs to the cytochrome P450 family. Requires heme as cofactor.

The protein localises to the membrane. The sequence is that of Probable cytochrome P450 508A2 (cyp508A2-1) from Dictyostelium discoideum (Social amoeba).